The chain runs to 251 residues: Triosephosphate isomerase (251 aa).

Residue 9 to 11 (NWK) coordinates substrate. His95 acts as the Electrophile in catalysis. Glu167 acts as the Proton acceptor in catalysis. Substrate is bound by residues Gly173, Ser213, and 234-235 (GG). The residue at position 213 (Ser213) is a Phosphoserine.

This sequence belongs to the triosephosphate isomerase family. In terms of assembly, homodimer.

It localises to the cytoplasm. The catalysed reaction is D-glyceraldehyde 3-phosphate = dihydroxyacetone phosphate. It participates in carbohydrate biosynthesis; gluconeogenesis. The protein operates within carbohydrate degradation; glycolysis; D-glyceraldehyde 3-phosphate from glycerone phosphate: step 1/1. Functionally, involved in the gluconeogenesis. Catalyzes stereospecifically the conversion of dihydroxyacetone phosphate (DHAP) to D-glyceraldehyde-3-phosphate (G3P). The polypeptide is Triosephosphate isomerase (Priestia megaterium (strain DSM 319 / IMG 1521) (Bacillus megaterium)).